The following is a 155-amino-acid chain: 2-C-methyl-D-erythritol 2,4-cyclodiphosphate synthase (155 aa).

The a divalent metal cation site is built by Asp8 and His10. Residues 8-10 (DVH) and 34-35 (HS) contribute to the 4-CDP-2-C-methyl-D-erythritol 2-phosphate site. His42 is a binding site for a divalent metal cation. Residues 56 to 58 (DIG), 61 to 65 (FPDKD), 132 to 135 (TTTE), and Arg142 contribute to the 4-CDP-2-C-methyl-D-erythritol 2-phosphate site.

It belongs to the IspF family. As to quaternary structure, homotrimer. Requires a divalent metal cation as cofactor.

The catalysed reaction is 4-CDP-2-C-methyl-D-erythritol 2-phosphate = 2-C-methyl-D-erythritol 2,4-cyclic diphosphate + CMP. Its pathway is isoprenoid biosynthesis; isopentenyl diphosphate biosynthesis via DXP pathway; isopentenyl diphosphate from 1-deoxy-D-xylulose 5-phosphate: step 4/6. Involved in the biosynthesis of isopentenyl diphosphate (IPP) and dimethylallyl diphosphate (DMAPP), two major building blocks of isoprenoid compounds. Catalyzes the conversion of 4-diphosphocytidyl-2-C-methyl-D-erythritol 2-phosphate (CDP-ME2P) to 2-C-methyl-D-erythritol 2,4-cyclodiphosphate (ME-CPP) with a corresponding release of cytidine 5-monophosphate (CMP). The sequence is that of 2-C-methyl-D-erythritol 2,4-cyclodiphosphate synthase from Desulfatibacillum aliphaticivorans.